A 240-amino-acid polypeptide reads, in one-letter code: Oxygen-insensitive NADPH nitroreductase (240 aa).

FMN-binding positions include 11–15 (HRSIR), S39, Q67, 128–131 (YIGG), and 167–169 (KPR).

The protein belongs to the flavin oxidoreductase frp family. As to quaternary structure, homodimer. Requires FMN as cofactor.

Its function is as follows. Catalyzes the reduction of nitroaromatic compounds using NADPH. Has a broad electron acceptor specificity. Reduces nitrofurazone by a ping-pong bi-bi mechanism possibly to generate a two-electron transfer product. Major oxygen-insensitive nitroreductase in E.coli. The protein is Oxygen-insensitive NADPH nitroreductase (nfsA) of Escherichia coli (strain K12).